We begin with the raw amino-acid sequence, 384 residues long: Dual-specificity RNA methyltransferase RlmN (384 aa).

Residue Glu-93 is the Proton acceptor of the active site. One can recognise a Radical SAM core domain in the interval 99–339; that stretch reads EETRGTLCVS…TTIRKTRGDD (241 aa). Cys-106 and Cys-344 are oxidised to a cystine. [4Fe-4S] cluster is bound by residues Cys-113, Cys-117, and Cys-120. Residues 170–171, Ser-202, 224–226, and Asn-301 contribute to the S-adenosyl-L-methionine site; these read GE and SLH. The active-site S-methylcysteine intermediate is Cys-344.

The protein belongs to the radical SAM superfamily. RlmN family. [4Fe-4S] cluster serves as cofactor.

Its subcellular location is the cytoplasm. The enzyme catalyses adenosine(2503) in 23S rRNA + 2 reduced [2Fe-2S]-[ferredoxin] + 2 S-adenosyl-L-methionine = 2-methyladenosine(2503) in 23S rRNA + 5'-deoxyadenosine + L-methionine + 2 oxidized [2Fe-2S]-[ferredoxin] + S-adenosyl-L-homocysteine. It carries out the reaction adenosine(37) in tRNA + 2 reduced [2Fe-2S]-[ferredoxin] + 2 S-adenosyl-L-methionine = 2-methyladenosine(37) in tRNA + 5'-deoxyadenosine + L-methionine + 2 oxidized [2Fe-2S]-[ferredoxin] + S-adenosyl-L-homocysteine. Its function is as follows. Specifically methylates position 2 of adenine 2503 in 23S rRNA and position 2 of adenine 37 in tRNAs. m2A2503 modification seems to play a crucial role in the proofreading step occurring at the peptidyl transferase center and thus would serve to optimize ribosomal fidelity. The polypeptide is Dual-specificity RNA methyltransferase RlmN (Cupriavidus pinatubonensis (strain JMP 134 / LMG 1197) (Cupriavidus necator (strain JMP 134))).